A 501-amino-acid chain; its full sequence is Putative antiporter subunit mnhD2 (501 aa).

The next 14 membrane-spanning stretches (helical) occupy residues 4–24 (SNLL…LVFI), 33–53 (IFSI…LIYV), 79–99 (LSLL…AYGF), 109–129 (YYLP…FLTA), 131–151 (LFNI…LITL), 162–182 (IIYV…VGLL), 207–227 (IVIV…LVLF), 245–265 (FAAL…TLIF), 274–294 (PLLV…VLAY), 309–329 (IGFI…GAIF), 334–354 (DIVV…ITGL), 369–389 (FFGV…PFSG), 409–429 (LALM…IFFV), and 452–472 (NLIG…PLLF).

The protein belongs to the CPA3 antiporters (TC 2.A.63) subunit D family. In terms of assembly, may form a heterooligomeric complex that consists of seven subunits: mnhA2, mnhB2, mnhC2, mnhD2, mnhE2, mnhF2 and mnhG2.

It is found in the cell membrane. This Staphylococcus saprophyticus subsp. saprophyticus (strain ATCC 15305 / DSM 20229 / NCIMB 8711 / NCTC 7292 / S-41) protein is Putative antiporter subunit mnhD2 (mnhD2).